The chain runs to 276 residues: Large ribosomal subunit protein uL2 (276 aa).

Residues 212-276 (NRHRGIRPQT…KLIISRKKHK (65 aa)) are disordered. Residues 257–276 (YKTRKKKASDKLIISRKKHK) show a composition bias toward basic residues.

Belongs to the universal ribosomal protein uL2 family. Part of the 50S ribosomal subunit. Forms a bridge to the 30S subunit in the 70S ribosome.

One of the primary rRNA binding proteins. Required for association of the 30S and 50S subunits to form the 70S ribosome, for tRNA binding and peptide bond formation. It has been suggested to have peptidyltransferase activity; this is somewhat controversial. Makes several contacts with the 16S rRNA in the 70S ribosome. This is Large ribosomal subunit protein uL2 from Helicobacter pylori (strain P12).